We begin with the raw amino-acid sequence, 199 residues long: Charged multivesicular body protein 1B2 (199 aa).

Residues 15–47 (AKELNRNAKKCDKEEKAEKAKIKKAIQKGNTEV) adopt a coiled-coil conformation. Positions 132 to 156 (MEDTMSSTTTLTTPQNQVDMLLQEM) are interaction with IST1. The segment at 167-199 (ELPQGQTGSVGASVASTEQDELSQRLARLRDQV) is disordered. The span at 170 to 183 (QGQTGSVGASVAST) shows a compositional bias: polar residues. An interaction with SPAST region spans residues 174–199 (GSVGASVASTEQDELSQRLARLRDQV). Positions 177–199 (GASVASTEQDELSQRLARLRDQV) form a coiled coil. Residues 180 to 196 (VASTEQDELSQRLARLR) are interaction with VPS4A, MITD1 and STAMBP. The segment at 180–199 (VASTEQDELSQRLARLRDQV) is interaction with VTA1. The interaction with VPS4B stretch occupies residues 183-199 (TEQDELSQRLARLRDQV). The short motif at 186–196 (DELSQRLARLR) is the MIT-interacting motif element.

Belongs to the SNF7 family. In terms of assembly, probable peripherally associated component of the endosomal sorting required for transport complex III (ESCRT-III). ESCRT-III components are thought to multimerize to form a flat lattice on the perimeter membrane of the endosome. Several assembly forms of ESCRT-III may exist that interact and act sequentially. Interacts with CHMP1A. Interacts with VTA1; the interaction probably involves the open conformation of CHMP1B. Interacts with CHMP2A. Interacts with VPS4A; the interaction is direct. Interacts with VPS4B; the interaction is direct. Interacts with SPAST (via MIT domain); the interaction is direct. Interacts with IST1. Interacts with MITD1. Interacts with STAMBP.

It localises to the cytoplasm. The protein resides in the cytosol. It is found in the endosome. The protein localises to the late endosome membrane. In terms of biological role, probable peripherally associated component of the endosomal sorting required for transport complex III (ESCRT-III) which is involved in multivesicular bodies (MVBs) formation and sorting of endosomal cargo proteins into MVBs. MVBs contain intraluminal vesicles (ILVs) that are generated by invagination and scission from the limiting membrane of the endosome and mostly are delivered to lysosomes enabling degradation of membrane proteins, such as stimulated growth factor receptors, lysosomal enzymes and lipids. The MVB pathway appears to require the sequential function of ESCRT-O, -I,-II and -III complexes. ESCRT-III proteins mostly dissociate from the invaginating membrane before the ILV is released. The ESCRT machinery also functions in topologically equivalent membrane fission events, such as the terminal stages of cytokinesis. ESCRT-III proteins are believed to mediate the necessary vesicle extrusion and/or membrane fission activities, possibly in conjunction with the AAA ATPase VPS4. Involved in cytokinesis. Involved in recruiting VPS4A and/or VPS4B and SPAST to the midbody of dividing cells. The polypeptide is Charged multivesicular body protein 1B2 (Mus musculus (Mouse)).